A 278-amino-acid polypeptide reads, in one-letter code: NAD-dependent protein deacylase (278 aa).

Positions 22 to 270 constitute a Deacetylase sirtuin-type domain; it reads RSRIFHRDSA…PEYIREFLTT (249 aa). 46-65 provides a ligand contact to NAD(+); the sequence is GAGISAESGIRTFRADDGLW. Substrate contacts are provided by tyrosine 90 and arginine 93. Residue 127-130 participates in NAD(+) binding; it reads QNID. Histidine 145 serves as the catalytic Proton acceptor. The Zn(2+) site is built by cysteine 153 and cysteine 172. NAD(+) contacts are provided by residues 212 to 214, 238 to 240, and alanine 256; these read GTS and NLE.

This sequence belongs to the sirtuin family. Class III subfamily. The cofactor is Zn(2+).

It localises to the cytoplasm. The enzyme catalyses N(6)-acetyl-L-lysyl-[protein] + NAD(+) + H2O = 2''-O-acetyl-ADP-D-ribose + nicotinamide + L-lysyl-[protein]. The catalysed reaction is N(6)-succinyl-L-lysyl-[protein] + NAD(+) + H2O = 2''-O-succinyl-ADP-D-ribose + nicotinamide + L-lysyl-[protein]. It catalyses the reaction N(6)-(2-hydroxyisobutanoyl)-L-lysyl-[protein] + NAD(+) + H2O = 2''-O-(2-hydroxyisobutanoyl)-ADP-D-ribose + nicotinamide + L-lysyl-[protein]. Functionally, NAD-dependent lysine deacetylase that specifically removes acetyl groups on target proteins. Also acts as a protein-lysine deacylase by mediating protein desuccinylation and de-2-hydroxyisobutyrylation. Modulates the activities of several proteins which are inactive in their acylated form. The sequence is that of NAD-dependent protein deacylase from Yersinia pestis.